A 418-amino-acid chain; its full sequence is Beta-arrestin-1 (418 aa).

Positions 1 to 163 are interaction with SRC; that stretch reads MGDKGTRVFK…LEEKIHKRNS (163 aa). Positions 45-86 are interaction with CHRM2; it reads PEYLKERRVYVTLTCAFRYGREDLDVLGLTFRKDLFVANVQS. Tyr-47 is subject to Phosphotyrosine. 4 residues coordinate 1D-myo-inositol hexakisphosphate: Lys-250, Met-255, Lys-324, and Lys-326. The interaction with TRAF6 stretch occupies residues 318–418; the sequence is IVSYKVKVKL…GTGSPRLNDR (101 aa). The segment at 353–375 is disordered; that stretch reads HPKPKEEPPHREVPEHETPVDTN. Over residues 355–371 the composition is skewed to basic and acidic residues; the sequence is KPKEEPPHREVPEHETP. The [DE]-X(1,2)-F-X-X-[FL]-X-X-X-R motif motif lies at 385-395; it reads DIVFEDFARQR. The disordered stretch occupies residues 397-418; it reads KGMKDDKEEEEDGTGSPRLNDR. Ser-412 is modified (phosphoserine; by GRK5).

The protein belongs to the arrestin family. As to quaternary structure, monomer. Homodimer. Homooligomer; the self-association is mediated by InsP6-binding. Heterooligomer with ARRB2; the association is mediated by InsP6-binding. Interacts with ADRB2 (phosphorylated). Interacts with CHRM2 (phosphorylated). Interacts with LHCGR. Interacts with CYTH2 and CASR. Interacts with AP2B1 (dephosphorylated at 'Tyr-737'); phosphorylation of AP2B1 at 'Tyr-737' disrupts the interaction. Interacts (dephosphorylated at Ser-412) with CLTC. Interacts with CCR2 and GRK2. Interacts with CRR5. Interacts with PTAFR (phosphorylated on serine residues). Interacts with CLTC and MAP2K3. Interacts with CREB1. Interacts with TRAF6. Interacts with IGF1R and MDM2. Interacts with C5AR1. Interacts with PDE4D. Interacts with SRC (via the SH3 domain and the protein kinase domain); the interaction is independent of the phosphorylation state of SRC C-terminus. Interacts with TACR1. Interacts with RAF1. Interacts with CHUK, IKBKB and MAP3K14. Interacts with DVL1; the interaction is enhanced by phosphorylation of DVL1. Interacts with DVL2; the interaction is enhanced by phosphorylation of DVL2. Interacts with IGF1R. Associates with MAP kinase p38. Part of a MAPK signaling complex consisting of TACR1, ARRB1, SRC, MAPK1 (activated) and MAPK3 (activated). Part of a MAPK signaling complex consisting of F2RL1, ARRB1, RAF1, MAPK1 (activated) and MAPK3 (activated). Interacts with GPR143. Interacts with MAP2K4/MKK4. Interacts with HCK and CXCR1 (phosphorylated). Interacts with ACKR3 and ACKR4. Interacts with ARRDC1; the interaction is direct. Interacts with GPR61, GPR62 and GPR135. Constitutively phosphorylated at Ser-412 in the cytoplasm. At the plasma membrane, is rapidly dephosphorylated, a process that is required for clathrin binding and ADRB2 endocytosis but not for ADRB2 binding and desensitization. Once internalized, is rephosphorylated. In terms of processing, the ubiquitination status appears to regulate the formation and trafficking of beta-arrestin-GPCR complexes and signaling. Ubiquitination appears to occur GPCR-specific. Ubiquitinated by MDM2; the ubiquitination is required for rapid internalization of ADRB2. Deubiquitinated by USP33; the deubiquitination leads to a dissociation of the beta-arrestin-GPCR complex. Stimulation of a class A GPCR, such as ADRB2, induces transient ubiquitination and subsequently promotes association with USP33. As to expression, beta-arrestin 1A is found in cortex, cerebellum, striatum, pineal gland, retina and heart. Beta-arrestin 1B is found in spleen, lung, pituitary and kidney.

Its subcellular location is the cytoplasm. It is found in the nucleus. The protein localises to the cell membrane. The protein resides in the membrane. It localises to the clathrin-coated pit. Its subcellular location is the cell projection. It is found in the pseudopodium. The protein localises to the cytoplasmic vesicle. Its function is as follows. Functions in regulating agonist-mediated G-protein coupled receptor (GPCR) signaling by mediating both receptor desensitization and resensitization processes. During homologous desensitization, beta-arrestins bind to the GPRK-phosphorylated receptor and sterically preclude its coupling to the cognate G-protein; the binding appears to require additional receptor determinants exposed only in the active receptor conformation. The beta-arrestins target many receptors for internalization by acting as endocytic adapters (CLASPs, clathrin-associated sorting proteins) and recruiting the GPRCs to the adapter protein 2 complex 2 (AP-2) in clathrin-coated pits (CCPs). However, the extent of beta-arrestin involvement appears to vary significantly depending on the receptor, agonist and cell type. Internalized arrestin-receptor complexes traffic to intracellular endosomes, where they remain uncoupled from G-proteins. Two different modes of arrestin-mediated internalization occur. Class A receptors, like ADRB2, OPRM1, ENDRA, D1AR and ADRA1B dissociate from beta-arrestin at or near the plasma membrane and undergo rapid recycling. Class B receptors, like AVPR2, AGTR1, NTSR1, TRHR and TACR1 internalize as a complex with arrestin and traffic with it to endosomal vesicles, presumably as desensitized receptors, for extended periods of time. Receptor resensitization then requires that receptor-bound arrestin is removed so that the receptor can be dephosphorylated and returned to the plasma membrane. Involved in internalization of P2RY4 and UTP-stimulated internalization of P2RY2. Involved in phosphorylation-dependent internalization of OPRD1 ands subsequent recycling. Involved in the degradation of cAMP by recruiting cAMP phosphodiesterases to ligand-activated receptors. Beta-arrestins function as multivalent adapter proteins that can switch the GPCR from a G-protein signaling mode that transmits short-lived signals from the plasma membrane via small molecule second messengers and ion channels to a beta-arrestin signaling mode that transmits a distinct set of signals that are initiated as the receptor internalizes and transits the intracellular compartment. Acts as a signaling scaffold for MAPK pathways such as MAPK1/3 (ERK1/2). ERK1/2 activated by the beta-arrestin scaffold is largely excluded from the nucleus and confined to cytoplasmic locations such as endocytic vesicles, also called beta-arrestin signalosomes. Recruits c-Src/SRC to ADRB2 resulting in ERK activation. GPCRs for which the beta-arrestin-mediated signaling relies on both ARRB1 and ARRB2 (codependent regulation) include ADRB2, F2RL1 and PTH1R. For some GPCRs the beta-arrestin-mediated signaling relies on either ARRB1 or ARRB2 and is inhibited by the other respective beta-arrestin form (reciprocal regulation). Inhibits ERK1/2 signaling in AGTR1- and AVPR2-mediated activation (reciprocal regulation). Is required for SP-stimulated endocytosis of NK1R and recruits c-Src/SRC to internalized NK1R resulting in ERK1/2 activation, which is required for the antiapoptotic effects of SP. Is involved in proteinase-activated F2RL1-mediated ERK activity. Acts as a signaling scaffold for the AKT1 pathway. Is involved in alpha-thrombin-stimulated AKT1 signaling. Is involved in IGF1-stimulated AKT1 signaling leading to increased protection from apoptosis. Involved in activation of the p38 MAPK signaling pathway and in actin bundle formation. Involved in F2RL1-mediated cytoskeletal rearrangement and chemotaxis. Involved in AGTR1-mediated stress fiber formation by acting together with GNAQ to activate RHOA. Appears to function as signaling scaffold involved in regulation of MIP-1-beta-stimulated CCR5-dependent chemotaxis. Involved in attenuation of NF-kappa-B-dependent transcription in response to GPCR or cytokine stimulation by interacting with and stabilizing CHUK. May serve as nuclear messenger for GPCRs. Involved in OPRD1-stimulated transcriptional regulation by translocating to CDKN1B and FOS promoter regions and recruiting EP300 resulting in acetylation of histone H4. Involved in regulation of LEF1 transcriptional activity via interaction with DVL1 and/or DVL2 Also involved in regulation of receptors other than GPCRs. Involved in Toll-like receptor and IL-1 receptor signaling through the interaction with TRAF6 which prevents TRAF6 autoubiquitination and oligomerization required for activation of NF-kappa-B and JUN. Involved in IL8-mediated granule release in neutrophils. Binds phosphoinositides. Binds inositol hexakisphosphate (InsP6). Required for atypical chemokine receptor ACKR2-induced RAC1-LIMK1-PAK1-dependent phosphorylation of cofilin (CFL1) and for the up-regulation of ACKR2 from endosomal compartment to cell membrane, increasing its efficiency in chemokine uptake and degradation. Involved in the internalization of the atypical chemokine receptor ACKR3. Negatively regulates the NOTCH signaling pathway by mediating the ubiquitination and degradation of NOTCH1 by ITCH. Participates in the recruitment of the ubiquitin-protein ligase to the receptor. The chain is Beta-arrestin-1 (ARRB1) from Bos taurus (Bovine).